The sequence spans 944 residues: Protein translocase subunit SecA (944 aa).

Residues glutamine 96, 114–118, and aspartate 554 contribute to the ATP site; that span reads GEGKT.

Belongs to the SecA family. As to quaternary structure, monomer and homodimer. Part of the essential Sec protein translocation apparatus which comprises SecA, SecYEG and auxiliary proteins SecDF. Other proteins may also be involved.

It is found in the cell inner membrane. It localises to the cytoplasm. The catalysed reaction is ATP + H2O + cellular proteinSide 1 = ADP + phosphate + cellular proteinSide 2.. In terms of biological role, part of the Sec protein translocase complex. Interacts with the SecYEG preprotein conducting channel. Has a central role in coupling the hydrolysis of ATP to the transfer of proteins into and across the cell membrane, serving as an ATP-driven molecular motor driving the stepwise translocation of polypeptide chains across the membrane. This is Protein translocase subunit SecA from Hydrogenobaculum sp. (strain Y04AAS1).